Here is a 530-residue protein sequence, read N- to C-terminus: uncharacterized protein (530 aa).

Composition is skewed to polar residues over residues 60 to 74 (LNESSLRSQQESSTP) and 92 to 103 (GQGTSRPLPTLS). Disordered regions lie at residues 60–103 (LNES…PTLS) and 121–155 (ASSTNEPQELPDPRDAPREGSFRLDGNQSEFGLGN). Basic and acidic residues predominate over residues 131 to 142 (PDPRDAPREGSF).

This is an uncharacterized protein from Mus musculus (Mouse).